A 425-amino-acid chain; its full sequence is Decarboxylase flvG (425 aa).

Position 82 is an N6-(pyridoxal phosphate)lysine (Lys-82). Pyridoxal 5'-phosphate contacts are provided by residues Ser-213, Gly-250, and 281 to 284 (EPGR). 331–332 (FE) contacts substrate. The Proton donor; shared with dimeric partner role is filled by Cys-365. Asp-366 serves as a coordination point for substrate. Tyr-395 is a binding site for pyridoxal 5'-phosphate.

Belongs to the Orn/Lys/Arg decarboxylase class-II family. As to quaternary structure, homodimer. Only the dimer is catalytically active, as the active sites are constructed of residues from both monomers. Pyridoxal 5'-phosphate is required as a cofactor.

The protein resides in the cytoplasm. It catalyses the reaction N(6),N(6)-dimethyl-L-lysine + H(+) = N,N-dimethyl-cadaverine + CO2. The protein operates within secondary metabolite biosynthesis; terpenoid biosynthesis. Decarboxylase; part of the gene cluster that mediates the biosynthesis of flavunoidine, an alkaloidal terpenoid with a tetracyclic cage-like core connected to dimethylcadaverine via a C-N bond and acylated with 5,5-dimethyl-L-pipecolate. The tetracyclic core is synthesized by the terpene cyclase flvE and the cytochrome P450 monooxygenase flvD. The terpene cyclase flvE catalyzes the cyclization of farnesyl pyrophosphate (FPP) to form (1R,4R,5S)-(+)-acoradiene and the cytochrome P450 monooxygenase flvD is then responsible for oxidative conversion of (1R,4R,5S)-(+)-acoradiene into the tetracyclic cage present in the final product flavunoidine. In parallel, the N-methyltransferase flvH dimethylates L-lysine to give N,N-dimethyl-L-Lysin which is decarboxylated by flvG to afford dimethylcadaverine. The terpene cyclase-like protein flvF is the enzyme that attaches the dimethylcadaverine precusor at the C-7 of the tetracyclic cage to yield pre-flavunoidine. The cytochrome monooxygenase flvC hydroxylates the C-10 position of pre-flavunoidine whereas the NRPS flvI acylates the terpenoid core at the hydroxylated C-10 with dimethylpipecolate to yield final flavunoidine. The bifunctional enzyme flvA and the dehydrogenase flvB are responsible for the synthesis of the dimethylpipecolate precursor. The PLP-dependent lyase domain of flvA might use L-O-acetyl-homoserine and alpha-keto-isovalerate to form an intermediary ketone that can cyclize intramolecularly to yield an imine. The imine can be reduced by flvB to yield the 6-carboxylated pipecolate. The C-terminal alpha-KG-dependent oxygenase domain of flvA is then proposed to catalyze the decarboxylation to yield dimethylpipecolate. The protein is Decarboxylase flvG of Aspergillus flavus (strain ATCC 200026 / FGSC A1120 / IAM 13836 / NRRL 3357 / JCM 12722 / SRRC 167).